The sequence spans 171 residues: Acetyltransferase PA2271 (171 aa).

One can recognise an N-acetyltransferase domain in the interval 3 to 162; it reads YRIRTSRDED…HEQEIGFAAD (160 aa). CoA is bound by residues 84 to 86 and 128 to 130; these read LSI and PFY.

In terms of biological role, catalyzes the transfer of an acetyl group from acetyl coenzyme A (AcCoA) to an acceptor substrate and releases both CoA and the acetylated product. It can use a variety of substrates including spermidine, spermine and N(8)-acetylspermidine, 7-aminocephalosporanic acid, colistin and thiamine. This is Acetyltransferase PA2271 from Pseudomonas aeruginosa (strain ATCC 15692 / DSM 22644 / CIP 104116 / JCM 14847 / LMG 12228 / 1C / PRS 101 / PAO1).